Consider the following 429-residue polypeptide: GTPase Obg (429 aa).

One can recognise an Obg domain in the interval 1–158; it reads MFADSAKIFI…LNVTLELKVI (158 aa). The OBG-type G domain occupies 159 to 333; that stretch reads ADVGLVGFPN…LLYYVSDLLK (175 aa). GTP contacts are provided by residues 165 to 172, 190 to 194, 212 to 215, 282 to 285, and 314 to 316; these read GFPNVGKS, FTTLN, DIPG, NKTD, and SAV. Residues Ser-172 and Thr-192 each coordinate Mg(2+). The region spanning 350–429 is the OCT domain; the sequence is ENLVMSEPYT…MYGLEFDYYK (80 aa).

It belongs to the TRAFAC class OBG-HflX-like GTPase superfamily. OBG GTPase family. Monomer. Mg(2+) serves as cofactor.

It localises to the cytoplasm. Its function is as follows. An essential GTPase which binds GTP, GDP and possibly (p)ppGpp with moderate affinity, with high nucleotide exchange rates and a fairly low GTP hydrolysis rate. Plays a role in control of the cell cycle, stress response, ribosome biogenesis and in those bacteria that undergo differentiation, in morphogenesis control. The chain is GTPase Obg from Lachnoclostridium phytofermentans (strain ATCC 700394 / DSM 18823 / ISDg) (Clostridium phytofermentans).